The chain runs to 82 residues: Mu-conotoxin MrVIA (82 aa).

The N-terminal stretch at 1–22 (MKLTCMMIVAVLFLTAWTLVMA) is a signal peptide. The propeptide occupies 23–49 (DDSNNGLANHFSKSRDEMEDPEASKLE). 3 cysteine pairs are disulfide-bonded: cysteine 53/cysteine 71, cysteine 60/cysteine 76, and cysteine 70/cysteine 81.

As to expression, expressed by the venom duct.

The protein resides in the secreted. In terms of biological role, muO-conotoxins are gating-modifier toxins that inhibit sodium current by trapping the domain II voltage sensor in the closed position to prevent opening of the sodium channel. This toxin inhibits rNav1.2/SCN2A (IC(50)=532 nM), rNav1.4/SCN4A (IC(50)=438 nM) and rNav1.7/SCN9A (IC(50)=345 nM). It blocks Nav channels by interacting mainly with the C-terminal part of the pore loop of domain-3. It does not bind on site 1. At small concentration, this toxin also acts as a calcium current agonist, whereas at higher doses it blocks fast-inactivating calcium current. The chain is Mu-conotoxin MrVIA from Conus marmoreus (Marble cone).